Here is a 486-residue protein sequence, read N- to C-terminus: BTB/POZ domain and ankyrin repeat-containing protein NBCL (486 aa).

Residues 25 to 115 enclose the BTB domain; it reads SDVTFSVEGR…LYSGQVSIVP (91 aa). Residues 121-135 form a C2HC NPR-type zinc finger; it reads RPNCGERGCWHTHCS. 4 residues coordinate Zn(2+): C124, C129, H131, and C134. ANK repeat units lie at residues 257–286, 287–316, 321–350, and 354–388; these read QKIRRMRRALDSSDVELVKLMVMGEGLNLD, EALALHYAVENCSREVVKALLELGAADVNY, AGKTPLHIAAEMVSPDMVAVLLDHHADPNV, and DNVTPLDILRTLTSDFLFKGAIPGLTHIEPNKLRL. Disordered regions lie at residues 403–441 and 464–486; these read EEGNANNNPPSSTTTTLPMYHHPMNDDHNSSSSSGNNHN and QMSDDHGGRHGDPAMYHHSHHDY. Low complexity-rich tracts occupy residues 406–418 and 432–441; these read NANNNPPSSTTTT and SSSSSGNNHN. A compositionally biased stretch (basic and acidic residues) spans 466–475; the sequence is SDDHGGRHGD.

Belongs to the plant 'ANKYRIN-BTB/POZ' family. 'NOOT-BOP-COCH-like' (NBCL) subfamily. As to quaternary structure, homodimer.

It localises to the nucleus. It is found in the cytoplasm. Its subcellular location is the cell membrane. It functions in the pathway protein modification; protein ubiquitination. Its function is as follows. May act as a substrate-specific adapter of an E3 ubiquitin-protein ligase complex (CUL3-RBX1-BTB) which mediates the ubiquitination and subsequent proteasomal degradation of target proteins. Transcriptional co-regulator involved in the promotion of leaf and floral meristem fate and determinacy. Necessary for the development of stipules at the base of petioles. Required for the abscission of senescent organs, probably by regulating the cell wall disorganization in abscission zones (AZs, e.g. pulvini at the base of leaves). Promotes slightly root-cap border cells separation from the root tip. Involved in the coordination of the symbiotic nodule developmental program; promotes the formation of root nodules by interacting directly with APP1 to modulate the expression of the nuclear transcription factor Y subunit (NF-YA1), a key nodulin. Necessary for the robust maintenance of nodule identity throughout the nodule developmental program. In Lupinus angustifolius (Narrow-leaved blue lupine), this protein is BTB/POZ domain and ankyrin repeat-containing protein NBCL.